The sequence spans 238 residues: MMKVLLKGQTLLALMISLSLSSLLLLSISHFYVQIQTQNQHMLLHLKLQAELQRTLQLIGKDLRRLGFRALNAKLTESNLSLFELDEQGTAIFISQEDNAPPNSCVLFFYDLNKNGCIGKGSPKTCMKKGKNTSKSSTEELFGYKVSNKMIKTKLTYQSVIPTNCTAETCKRAFQQTACNAGGGWADLLDNNEYEITRLQFNWLIEGKGLEIKLKGNLKQTPNISYETSLVVVLWNQK.

Residues 10–33 (TLLALMISLSLSSLLLLSISHFYV) traverse the membrane as a helical segment.

The protein resides in the membrane. This is an uncharacterized protein from Haemophilus influenzae (strain ATCC 51907 / DSM 11121 / KW20 / Rd).